A 140-amino-acid chain; its full sequence is 3-hydroxyacyl-[acyl-carrier-protein] dehydratase FabZ (140 aa).

His-48 is a catalytic residue.

Belongs to the thioester dehydratase family. FabZ subfamily.

It is found in the cytoplasm. It carries out the reaction a (3R)-hydroxyacyl-[ACP] = a (2E)-enoyl-[ACP] + H2O. In terms of biological role, involved in unsaturated fatty acids biosynthesis. Catalyzes the dehydration of short chain beta-hydroxyacyl-ACPs and long chain saturated and unsaturated beta-hydroxyacyl-ACPs. This is 3-hydroxyacyl-[acyl-carrier-protein] dehydratase FabZ from Caldicellulosiruptor saccharolyticus (strain ATCC 43494 / DSM 8903 / Tp8T 6331).